A 139-amino-acid chain; its full sequence is Putative pre-16S rRNA nuclease (139 aa).

It belongs to the YqgF nuclease family.

The protein resides in the cytoplasm. Functionally, could be a nuclease involved in processing of the 5'-end of pre-16S rRNA. The chain is Putative pre-16S rRNA nuclease from Bacillus licheniformis (strain ATCC 14580 / DSM 13 / JCM 2505 / CCUG 7422 / NBRC 12200 / NCIMB 9375 / NCTC 10341 / NRRL NRS-1264 / Gibson 46).